Consider the following 248-residue polypeptide: Pyridoxine 5'-phosphate synthase (248 aa).

Residue Asn11 coordinates 3-amino-2-oxopropyl phosphate. Asp13–His14 is a 1-deoxy-D-xylulose 5-phosphate binding site. Arg22 provides a ligand contact to 3-amino-2-oxopropyl phosphate. His47 functions as the Proton acceptor in the catalytic mechanism. 2 residues coordinate 1-deoxy-D-xylulose 5-phosphate: Arg49 and His54. Catalysis depends on Glu74, which acts as the Proton acceptor. Thr104 contributes to the 1-deoxy-D-xylulose 5-phosphate binding site. His198 serves as the catalytic Proton donor. 3-amino-2-oxopropyl phosphate is bound by residues Gly199 and Gly220 to His221.

Belongs to the PNP synthase family. In terms of assembly, homooctamer; tetramer of dimers.

Its subcellular location is the cytoplasm. It carries out the reaction 3-amino-2-oxopropyl phosphate + 1-deoxy-D-xylulose 5-phosphate = pyridoxine 5'-phosphate + phosphate + 2 H2O + H(+). It participates in cofactor biosynthesis; pyridoxine 5'-phosphate biosynthesis; pyridoxine 5'-phosphate from D-erythrose 4-phosphate: step 5/5. Catalyzes the complicated ring closure reaction between the two acyclic compounds 1-deoxy-D-xylulose-5-phosphate (DXP) and 3-amino-2-oxopropyl phosphate (1-amino-acetone-3-phosphate or AAP) to form pyridoxine 5'-phosphate (PNP) and inorganic phosphate. The chain is Pyridoxine 5'-phosphate synthase from Ruegeria pomeroyi (strain ATCC 700808 / DSM 15171 / DSS-3) (Silicibacter pomeroyi).